The following is a 239-amino-acid chain: DNA repair protein RecO (239 aa).

The protein belongs to the RecO family.

In terms of biological role, involved in DNA repair and RecF pathway recombination. This Stenotrophomonas maltophilia (strain K279a) protein is DNA repair protein RecO.